Here is a 149-residue protein sequence, read N- to C-terminus: Putative inactive group IIC secretory phospholipase A2 (149 aa).

The first 18 residues, 1-18 (MKVIAILTLLLFCSPTHS), serve as a signal peptide directing secretion. Disulfide bonds link Cys-44-Cys-142, Cys-77-Cys-107, Cys-95-Cys-112, and Cys-97-Cys-105. Ca(2+) contacts are provided by Tyr-45, Gly-47, and Gly-49.

It belongs to the phospholipase A2 family. Requires Ca(2+) as cofactor.

It localises to the secreted. In terms of biological role, inactive phospholipase. The chain is Putative inactive group IIC secretory phospholipase A2 (PLA2G2C) from Homo sapiens (Human).